Reading from the N-terminus, the 207-residue chain is Methylated-DNA--protein-cysteine methyltransferase (207 aa).

A Zn(2+)-binding site is contributed by C5. S14 is modified (phosphoserine). The Zn(2+) site is built by C24, H29, and H85. Residues T95, Y114, Q115, N123, and R128 each contribute to the DNA site. C145 acts as the Nucleophile; methyl group acceptor in catalysis. S151 is a binding site for DNA. S201 carries the post-translational modification Phosphoserine.

The protein belongs to the MGMT family. Requires Zn(2+) as cofactor.

The protein resides in the nucleus. It catalyses the reaction a 6-O-methyl-2'-deoxyguanosine in DNA + L-cysteinyl-[protein] = S-methyl-L-cysteinyl-[protein] + a 2'-deoxyguanosine in DNA. The catalysed reaction is a 4-O-methyl-thymidine in DNA + L-cysteinyl-[protein] = a thymidine in DNA + S-methyl-L-cysteinyl-[protein]. In terms of biological role, involved in the cellular defense against the biological effects of O6-methylguanine (O6-MeG) and O4-methylthymine (O4-MeT) in DNA. Repairs the methylated nucleobase in DNA by stoichiometrically transferring the methyl group to a cysteine residue in the enzyme. This is a suicide reaction: the enzyme is irreversibly inactivated. This chain is Methylated-DNA--protein-cysteine methyltransferase (MGMT), found in Homo sapiens (Human).